The sequence spans 277 residues: Bifunctional protein FolD (277 aa).

NADP(+) is bound by residues 164–166 (GRS), Ser-189, and Thr-230.

The protein belongs to the tetrahydrofolate dehydrogenase/cyclohydrolase family. In terms of assembly, homodimer.

It catalyses the reaction (6R)-5,10-methylene-5,6,7,8-tetrahydrofolate + NADP(+) = (6R)-5,10-methenyltetrahydrofolate + NADPH. The catalysed reaction is (6R)-5,10-methenyltetrahydrofolate + H2O = (6R)-10-formyltetrahydrofolate + H(+). Its pathway is one-carbon metabolism; tetrahydrofolate interconversion. Catalyzes the oxidation of 5,10-methylenetetrahydrofolate to 5,10-methenyltetrahydrofolate and then the hydrolysis of 5,10-methenyltetrahydrofolate to 10-formyltetrahydrofolate. This Clostridium perfringens (strain SM101 / Type A) protein is Bifunctional protein FolD.